The sequence spans 208 residues: Coiled-coil domain-containing protein 25 (208 aa).

The Extracellular segment spans residues 1–105 (MVFYFTSSSV…SNLKKTADMD (105 aa)). A DNA-binding region spans residues 21 to 25 (KDKYE). K23 carries the post-translational modification N6-acetyllysine. Residues 106 to 122 (VGQIGFHRQKDVKIVTV) form a helical membrane-spanning segment. Residues 117-187 (VKIVTVEKKV…REMDELRSYS (71 aa)) are a coiled coil. Residues 123–208 (EKKVNEILNR…QDGNDSDEFM (86 aa)) lie on the Cytoplasmic side of the membrane. Residues 144–184 (LAAEKEGRDREERNEKKAQIQEMKRKEKEEMKKKREMDELR) are compositionally biased toward basic and acidic residues. The tract at residues 144–208 (LAAEKEGRDR…QDGNDSDEFM (65 aa)) is disordered. The residue at position 204 (S204) is a Phosphoserine.

It belongs to the CCDC25 family. As to quaternary structure, interacts (via cytoplasmic region) with ILK.

It is found in the cell membrane. The protein resides in the endomembrane system. Transmembrane receptor that senses neutrophil extracellular traps (NETs) and triggers the ILK-PARVB pathway to enhance cell motility. NETs are mainly composed of DNA fibers and are released by neutrophils to bind pathogens during inflammation. Formation of NETs is also associated with cancer metastasis, NET-DNA acting as a chemotactic factor to attract cancer cells. Specifically binds NETs on its extracellular region, in particular the 8-OHdG-enriched DNA present in NETs, and recruits ILK, initiating the ILK-PARVB cascade to induce cytoskeleton rearrangement and directional migration of cells. In the context of cancer, promotes cancer metastasis by sensing NETs and promoting migration of tumor cells. This chain is Coiled-coil domain-containing protein 25, found in Mus musculus (Mouse).